Here is a 473-residue protein sequence, read N- to C-terminus: Putative protein TIC 214 C-terminal part (473 aa).

This sequence belongs to the TIC214 family. As to quaternary structure, part of the Tic complex.

It localises to the plastid. The protein localises to the chloroplast. Involved in protein precursor import into chloroplasts. May be part of an intermediate translocation complex acting as a protein-conducting channel at the inner envelope. This Anthoceros angustus (Hornwort) protein is Putative protein TIC 214 C-terminal part.